A 465-amino-acid polypeptide reads, in one-letter code: Light-independent protochlorophyllide reductase subunit N (465 aa).

[4Fe-4S] cluster-binding residues include cysteine 23, cysteine 48, and cysteine 108.

Belongs to the BchN/ChlN family. Protochlorophyllide reductase is composed of three subunits; ChlL, ChlN and ChlB. Forms a heterotetramer of two ChlB and two ChlN subunits. [4Fe-4S] cluster is required as a cofactor.

It catalyses the reaction chlorophyllide a + oxidized 2[4Fe-4S]-[ferredoxin] + 2 ADP + 2 phosphate = protochlorophyllide a + reduced 2[4Fe-4S]-[ferredoxin] + 2 ATP + 2 H2O. Its pathway is porphyrin-containing compound metabolism; chlorophyll biosynthesis (light-independent). Functionally, component of the dark-operative protochlorophyllide reductase (DPOR) that uses Mg-ATP and reduced ferredoxin to reduce ring D of protochlorophyllide (Pchlide) to form chlorophyllide a (Chlide). This reaction is light-independent. The NB-protein (ChlN-ChlB) is the catalytic component of the complex. The sequence is that of Light-independent protochlorophyllide reductase subunit N from Trichodesmium erythraeum (strain IMS101).